A 392-amino-acid chain; its full sequence is Methylthioribose-1-phosphate isomerase (392 aa).

Asp253 acts as the Proton donor in catalysis.

The protein belongs to the eIF-2B alpha/beta/delta subunits family. MtnA subfamily.

The protein resides in the cytoplasm. It localises to the nucleus. It catalyses the reaction 5-(methylsulfanyl)-alpha-D-ribose 1-phosphate = 5-(methylsulfanyl)-D-ribulose 1-phosphate. The protein operates within amino-acid biosynthesis; L-methionine biosynthesis via salvage pathway; L-methionine from S-methyl-5-thio-alpha-D-ribose 1-phosphate: step 1/6. In terms of biological role, catalyzes the interconversion of methylthioribose-1-phosphate (MTR-1-P) into methylthioribulose-1-phosphate (MTRu-1-P). This Pyrenophora tritici-repentis (strain Pt-1C-BFP) (Wheat tan spot fungus) protein is Methylthioribose-1-phosphate isomerase (mri1).